A 48-amino-acid chain; its full sequence is Large ribosomal subunit protein bL32c (48 aa).

Belongs to the bacterial ribosomal protein bL32 family.

The protein resides in the plastid. Its subcellular location is the chloroplast. This chain is Large ribosomal subunit protein bL32c (rpl32), found in Vicia faba (Broad bean).